The sequence spans 100 residues: uncharacterized protein (100 aa).

The chain crosses the membrane as a helical span at residues 13–32; that stretch reads IWSSLNIICLMVTFLNVQLS.

The protein localises to the mitochondrion membrane. This is an uncharacterized protein from Schizosaccharomyces pombe (strain 972 / ATCC 24843) (Fission yeast).